The primary structure comprises 216 residues: Adenylate kinase (216 aa).

ATP is bound at residue 10 to 15; sequence GAGKGT. The NMP stretch occupies residues 30-59; that stretch reads STGDMLRAAVNAGTEVGKRAKAVMDAGKLV. AMP-binding positions include threonine 31, arginine 36, 57–59, 85–88, and glutamine 92; these read KLV and GFPR. The interval 126 to 163 is LID; that stretch reads GRYTCAQCGTVYHDTDKVPVEEGVCDKCGSTHFKRRPD. Arginine 127 lines the ATP pocket. The Zn(2+) site is built by cysteine 130 and cysteine 133. 136–137 contributes to the ATP binding site; sequence VY. Zn(2+) contacts are provided by cysteine 150 and cysteine 153. AMP contacts are provided by arginine 160 and arginine 172. ATP is bound at residue alanine 200.

This sequence belongs to the adenylate kinase family. In terms of assembly, monomer.

The protein resides in the cytoplasm. It carries out the reaction AMP + ATP = 2 ADP. Its pathway is purine metabolism; AMP biosynthesis via salvage pathway; AMP from ADP: step 1/1. In terms of biological role, catalyzes the reversible transfer of the terminal phosphate group between ATP and AMP. Plays an important role in cellular energy homeostasis and in adenine nucleotide metabolism. The polypeptide is Adenylate kinase (Rhizobium etli (strain ATCC 51251 / DSM 11541 / JCM 21823 / NBRC 15573 / CFN 42)).